Consider the following 126-residue polypeptide: Protein ApaG (126 aa).

Residues 2-126 form the ApaG domain; the sequence is SDPRYQIDVS…FRLAVPGALH (125 aa).

The chain is Protein ApaG from Pseudomonas putida (strain ATCC 700007 / DSM 6899 / JCM 31910 / BCRC 17059 / LMG 24140 / F1).